Here is a 334-residue protein sequence, read N- to C-terminus: Zinc-finger homeodomain protein 10 (334 aa).

Residues 1–15 (MMDMTPTITTTTTPT) are compositionally biased toward low complexity. 2 disordered regions span residues 1–33 (MMDM…QPAK) and 103–164 (FHRR…LLSL). The ZF-HD dimerization-type; degenerate zinc-finger motif lies at 56–107 (YKECLKNHAAALGGHALDGCGEFMPSPSSISSDPTSLKCAACGCHRNFHRRD). Over residues 136–155 (PPPPPPPPPRSPNSASPPPI) the composition is skewed to pro residues. Residues 200–263 (RKRFRTKFSQ…NNKNTFNRRD (64 aa)) constitute a DNA-binding region (homeobox). The interval 292 to 334 (NGHHGVGGGGELHQSVSSGGGGGGFDSDSGGANGGNVNGSSSS) is disordered. Residues 309-328 (SGGGGGGFDSDSGGANGGNV) show a composition bias toward gly residues.

Homo- and heterodimer with other ZFHD proteins. Interacts with MIF1, MIF2 and MIF3; these interactions prevent nuclear localization and DNA-binding to inhibit transcription regulation activity. Binds to ZHD1, ZHD2, ZHD4, ZHD5, ZHD6, ZHD7 and ZHD8. Interacts with KIN10 and KIN11. In terms of tissue distribution, mostly expressed in rosettes (e.g. young leaves), flowers (e.g. styles), siliques and inflorescence.

It localises to the nucleus. Putative transcription factor. Probably involved in establishing polarity during leaf development through the gibberellic acid (GA) signaling pathway. This is Zinc-finger homeodomain protein 10 (ZHD10) from Arabidopsis thaliana (Mouse-ear cress).